Reading from the N-terminus, the 295-residue chain is MPVESSKLLDGKGLAQKIQGELTAQIQTLQAEIGRPPGLAVLMVGDNPASAAYVRNKERACERLGIASFGHHFPAEVTFEEVKQTIHDLNANPQVDGILVQLPLPAHLDSTALLYEIDPDKDVDGLHPLNLGRLVRGEAGLRSCTPAGVMRLLAAYDVELSGLHAVVIGRSILVGKPVSLMLLAANATVTMAHSRTPDLAAVTRTADVLVAAVGKPGLITADMVKPGAVVIDVGISRQEIEGKARLVGDVEFTSVQSQSSLITPVPGGVGPITVSMLLENTVWSFRQRHKGSYNS.

NADP(+)-binding positions include 169 to 171 (GRS), S194, and I235.

It belongs to the tetrahydrofolate dehydrogenase/cyclohydrolase family. In terms of assembly, homodimer.

It catalyses the reaction (6R)-5,10-methylene-5,6,7,8-tetrahydrofolate + NADP(+) = (6R)-5,10-methenyltetrahydrofolate + NADPH. The catalysed reaction is (6R)-5,10-methenyltetrahydrofolate + H2O = (6R)-10-formyltetrahydrofolate + H(+). Its pathway is one-carbon metabolism; tetrahydrofolate interconversion. In terms of biological role, catalyzes the oxidation of 5,10-methylenetetrahydrofolate to 5,10-methenyltetrahydrofolate and then the hydrolysis of 5,10-methenyltetrahydrofolate to 10-formyltetrahydrofolate. The chain is Bifunctional protein FolD from Acaryochloris marina (strain MBIC 11017).